Consider the following 371-residue polypeptide: Methionine import ATP-binding protein MetN (371 aa).

The disordered stretch occupies residues 1–22; it reads MSEPFMNAPWQPPGDHPALKSP. The region spanning 27 to 268 is the ABC transporter domain; the sequence is ILIDSVRKLY…PRHEVTRRFV (242 aa). 65–72 contacts ATP; it reads GRSGAGKS.

This sequence belongs to the ABC transporter superfamily. Methionine importer (TC 3.A.1.24) family. As to quaternary structure, the complex is composed of two ATP-binding proteins (MetN), two transmembrane proteins (MetI) and a solute-binding protein (MetQ).

The protein localises to the cell inner membrane. It carries out the reaction L-methionine(out) + ATP + H2O = L-methionine(in) + ADP + phosphate + H(+). The catalysed reaction is D-methionine(out) + ATP + H2O = D-methionine(in) + ADP + phosphate + H(+). Its function is as follows. Part of the ABC transporter complex MetNIQ involved in methionine import. Responsible for energy coupling to the transport system. The polypeptide is Methionine import ATP-binding protein MetN (Rhodopseudomonas palustris (strain BisB5)).